A 327-amino-acid chain; its full sequence is GTPase Obg (327 aa).

The region spanning 2 to 160 (HILKDSLSIT…LNLRLELSLI (159 aa)) is the Obg domain. The region spanning 161-326 (ADIGLVGFPN…LVSELFALSR (166 aa)) is the OBG-type G domain. GTP is bound by residues 167–174 (GFPNAGKS), 192–196 (FTTRF), 213–216 (DVPG), 280–283 (NKLD), and 307–309 (SIY). The Mg(2+) site is built by S174 and T194.

This sequence belongs to the TRAFAC class OBG-HflX-like GTPase superfamily. OBG GTPase family. In terms of assembly, monomer. It depends on Mg(2+) as a cofactor.

It is found in the cytoplasm. Its function is as follows. An essential GTPase which binds GTP, GDP and possibly (p)ppGpp with moderate affinity, with high nucleotide exchange rates and a fairly low GTP hydrolysis rate. Plays a role in control of the cell cycle, stress response, ribosome biogenesis and in those bacteria that undergo differentiation, in morphogenesis control. The sequence is that of GTPase Obg from Borrelia hermsii (strain HS1 / DAH).